A 118-amino-acid chain; its full sequence is Non-specific lipid-transfer protein 5 (118 aa).

An N-terminal signal peptide occupies residues 1 to 25 (MEGLLKLSTLVIVCMLVTAPMASEA). 4 cysteine pairs are disulfide-bonded: cysteine 29–cysteine 76, cysteine 39–cysteine 53, cysteine 54–cysteine 100, and cysteine 74–cysteine 114.

The protein belongs to the plant LTP family.

Plant non-specific lipid-transfer proteins transfer phospholipids as well as galactolipids across membranes. May play a role in wax or cutin deposition in the cell walls of expanding epidermal cells and certain secretory tissues. The protein is Non-specific lipid-transfer protein 5 (LTP5) of Arabidopsis thaliana (Mouse-ear cress).